The sequence spans 418 residues: ADP-ribose glycohydrolase MACROD2 (418 aa).

The region spanning 57-238 (PEEIQVKNSL…IYKRKLNEFF (182 aa)) is the Macro domain. Residues 75–77 (GDI), 88–90 (AAN), 95–100 (GGGGVD), 183–189 (ISTGIYG), and Phe222 contribute to the substrate site. Residues 238 to 418 (FPKDGGDDEE…KDTNDDANEA (181 aa)) form a disordered region. Over residues 250 to 262 (KGDSDEMKEDTEG) the composition is skewed to basic and acidic residues. Residues 295-318 (TGNTQDMTAMSLETNEGNDVSSPA) are compositionally biased toward polar residues. The span at 321-360 (PLKEGEELSEAKITGEKISVEPKTPEPEDAKMTVEEKSQE) shows a compositional bias: basic and acidic residues. Residues 377–389 (ETEDLDGDSEEPS) show a composition bias toward acidic residues.

Belongs to the MacroD-type family. MacroD1/2-like subfamily.

The protein localises to the nucleus. It catalyses the reaction 2''-O-acetyl-ADP-D-ribose + H2O = ADP-D-ribose + acetate + H(+). The catalysed reaction is 4-O-(ADP-D-ribosyl)-L-aspartyl-[protein] + H2O = L-aspartyl-[protein] + ADP-D-ribose + H(+). It carries out the reaction 5-O-(ADP-D-ribosyl)-L-glutamyl-[protein] + H2O = L-glutamyl-[protein] + ADP-D-ribose + H(+). The enzyme catalyses alpha-NAD(+) + H2O = ADP-D-ribose + nicotinamide + H(+). With respect to regulation, subject to product inhibition by ADP-ribose. In terms of biological role, removes ADP-ribose from aspartate and glutamate residues in proteins bearing a single ADP-ribose moiety. Inactive towards proteins bearing poly-ADP-ribose. Deacetylates O-acetyl-ADP ribose, a signaling molecule generated by the deacetylation of acetylated lysine residues in histones and other proteins. This is ADP-ribose glycohydrolase MACROD2 from Xenopus laevis (African clawed frog).